We begin with the raw amino-acid sequence, 130 residues long: uncharacterized protein (130 aa).

Residues 19-73 form the HTH cro/C1-type domain; that stretch reads IYSLRLAKGLSRQQLAEVIDVTHQQLQKYEKAINRISVGRLVLIAEALDRNIDYF. Residues 30-49 constitute a DNA-binding region (H-T-H motif); sequence RQQLAEVIDVTHQQLQKYEK.

This is an uncharacterized protein from Rickettsia prowazekii (strain Madrid E).